Consider the following 556-residue polypeptide: Oxygen-dependent choline dehydrogenase (556 aa).

4 to 33 (DYIIIGAGSAGNVLATRLTEDPNTSVLLLE) is an FAD binding site. His-473 serves as the catalytic Proton acceptor.

It belongs to the GMC oxidoreductase family. Requires FAD as cofactor.

It carries out the reaction choline + A = betaine aldehyde + AH2. The catalysed reaction is betaine aldehyde + NAD(+) + H2O = glycine betaine + NADH + 2 H(+). It functions in the pathway amine and polyamine biosynthesis; betaine biosynthesis via choline pathway; betaine aldehyde from choline (cytochrome c reductase route): step 1/1. Involved in the biosynthesis of the osmoprotectant glycine betaine. Catalyzes the oxidation of choline to betaine aldehyde and betaine aldehyde to glycine betaine at the same rate. The polypeptide is Oxygen-dependent choline dehydrogenase (Shigella flexneri serotype 5b (strain 8401)).